We begin with the raw amino-acid sequence, 197 residues long: dITP/XTP pyrophosphatase (197 aa).

8-13 (TGNPGK) serves as a coordination point for substrate. Residues Glu40 and Asp69 each contribute to the Mg(2+) site. Asp69 functions as the Proton acceptor in the catalytic mechanism. Residues Ser70, 154 to 157 (FGYD), Lys177, and 182 to 183 (HR) each bind substrate.

The protein belongs to the HAM1 NTPase family. As to quaternary structure, homodimer. Requires Mg(2+) as cofactor.

The catalysed reaction is XTP + H2O = XMP + diphosphate + H(+). The enzyme catalyses dITP + H2O = dIMP + diphosphate + H(+). It carries out the reaction ITP + H2O = IMP + diphosphate + H(+). Pyrophosphatase that catalyzes the hydrolysis of nucleoside triphosphates to their monophosphate derivatives, with a high preference for the non-canonical purine nucleotides XTP (xanthosine triphosphate), dITP (deoxyinosine triphosphate) and ITP. Seems to function as a house-cleaning enzyme that removes non-canonical purine nucleotides from the nucleotide pool, thus preventing their incorporation into DNA/RNA and avoiding chromosomal lesions. The protein is dITP/XTP pyrophosphatase of Photorhabdus laumondii subsp. laumondii (strain DSM 15139 / CIP 105565 / TT01) (Photorhabdus luminescens subsp. laumondii).